We begin with the raw amino-acid sequence, 429 residues long: Adenylosuccinate synthetase (429 aa).

GTP-binding positions include 12-18 (GDEGKGK) and 40-42 (GHT). Residue Asp13 is the Proton acceptor of the active site. The Mg(2+) site is built by Asp13 and Gly40. IMP is bound by residues 13–16 (DEGK), 38–41 (NAGH), Thr128, Arg142, Gln223, Thr238, and Arg302. The Proton donor role is filled by His41. Position 298–304 (298–304 (TVTGRPR)) interacts with substrate. GTP-binding positions include Arg304, 330–332 (LLD), and 412–414 (SVG).

This sequence belongs to the adenylosuccinate synthetase family. As to quaternary structure, homodimer. Mg(2+) is required as a cofactor.

The protein localises to the cytoplasm. It catalyses the reaction IMP + L-aspartate + GTP = N(6)-(1,2-dicarboxyethyl)-AMP + GDP + phosphate + 2 H(+). Its pathway is purine metabolism; AMP biosynthesis via de novo pathway; AMP from IMP: step 1/2. Its function is as follows. Plays an important role in the de novo pathway of purine nucleotide biosynthesis. Catalyzes the first committed step in the biosynthesis of AMP from IMP. This is Adenylosuccinate synthetase from Lactobacillus helveticus (strain DPC 4571).